We begin with the raw amino-acid sequence, 202 residues long: Succinate dehydrogenase cytochrome b558 subunit (202 aa).

A run of 5 helical transmembrane segments spans residues 12 to 31 (LHSL…HLVV), 60 to 79 (IFII…YIAF), 93 to 113 (NWLF…VSWH), 135 to 155 (ILSS…TIFH), and 178 to 196 (ISTY…VGLK). 4 residues coordinate heme: H28, H70, H113, and H155.

It belongs to the cytochrome b558 family. As to quaternary structure, part of an enzyme complex containing three subunits: a flavoprotein, an iron-sulfur protein and cytochrome b-558.

It localises to the cell membrane. Its pathway is carbohydrate metabolism; tricarboxylic acid cycle. In terms of biological role, di-heme cytochrome of the succinate dehydrogenase complex. This chain is Succinate dehydrogenase cytochrome b558 subunit (sdhC), found in Bacillus subtilis (strain 168).